We begin with the raw amino-acid sequence, 325 residues long: Malate dehydrogenase (325 aa).

11 to 17 lines the NAD(+) pocket; sequence GAAGQIA. Positions 92 and 98 each coordinate substrate. NAD(+)-binding positions include N105, Q112, and 129 to 131; that span reads VGN. Residues N131 and R162 each coordinate substrate. The active-site Proton acceptor is H187.

This sequence belongs to the LDH/MDH superfamily. MDH type 2 family.

The enzyme catalyses (S)-malate + NAD(+) = oxaloacetate + NADH + H(+). Its function is as follows. Catalyzes the reversible oxidation of malate to oxaloacetate. The chain is Malate dehydrogenase from Methylococcus capsulatus (strain ATCC 33009 / NCIMB 11132 / Bath).